The following is a 459-amino-acid chain: Glutamate--isopropylamine ligase (459 aa).

The GS beta-grasp domain maps to 19 to 115 (HNIDTIRLGA…VLCDIQHLNG (97 aa)). Positions 122–459 (PRNLLRKAIE…WELARYLDII (338 aa)) constitute a GS catalytic domain.

Belongs to the glutamine synthetase family.

It catalyses the reaction isopropylamine + L-glutamate + ATP = gamma-L-glutamyl-isopropylamide + ADP + phosphate + H(+). Involved in the degradation of isopropylamine, which is a constituent of the herbicides atrazine. Catalyzes the ATP-dependent formation of gamma-glutamyl-isopropylamide from isopropylamine and L-glutamate. It can also use aminoalkanes, amino-alcohols (L-alaninol and D-alaninol) and amino-esters as substrates. This Pseudomonas sp protein is Glutamate--isopropylamine ligase (ipuC).